The sequence spans 590 residues: EGF-like and EMI domain-containing protein 1 (590 aa).

The signal sequence occupies residues M1 to A23. The EMI domain occupies L44–D104. The 41-residue stretch at D105 to Q145 folds into the EGF-like 1 domain. Cystine bridges form between C109/C125, C135/C144, C168/C179, C175/C188, C190/C203, C209/C219, C215/C228, C230/C243, C249/C260, C256/C269, and C271/C284. The region spanning N164–I204 is the EGF-like 2; calcium-binding domain. An EGF-like 3 domain is found at K205–E244. Residues D245 to Y285 enclose the EGF-like 4; calcium-binding domain. Residues R393 to E424 are disordered. Over residues Y413–E424 the composition is skewed to acidic residues. The region spanning F445–N481 is the EGF-like 5 domain. 3 disulfide bridges follow: C449–C462, C456–C469, and C471–C480.

This Mus musculus (Mouse) protein is EGF-like and EMI domain-containing protein 1 (Egfem1).